The primary structure comprises 109 residues: uncharacterized protein (109 aa).

Positions 27–89 (KEEAHQFRDK…LKRIDELIAV (63 aa)) form a coiled coil.

This is an uncharacterized protein from Streptococcus pneumoniae.